The chain runs to 83 residues: Translation initiation factor IF-1 (83 aa).

One can recognise an S1-like domain in the interval 1–72; that stretch reads MAKEELIEMQ…SKGRITFRHL (72 aa).

It belongs to the IF-1 family. As to quaternary structure, component of the 30S ribosomal translation pre-initiation complex which assembles on the 30S ribosome in the order IF-2 and IF-3, IF-1 and N-formylmethionyl-tRNA(fMet); mRNA recruitment can occur at any time during PIC assembly.

It localises to the cytoplasm. Functionally, one of the essential components for the initiation of protein synthesis. Stabilizes the binding of IF-2 and IF-3 on the 30S subunit to which N-formylmethionyl-tRNA(fMet) subsequently binds. Helps modulate mRNA selection, yielding the 30S pre-initiation complex (PIC). Upon addition of the 50S ribosomal subunit IF-1, IF-2 and IF-3 are released leaving the mature 70S translation initiation complex. The protein is Translation initiation factor IF-1 of Verminephrobacter eiseniae (strain EF01-2).